Consider the following 150-residue polypeptide: uncharacterized protein (150 aa).

The next 3 membrane-spanning stretches (helical) occupy residues 48–68, 89–109, and 123–143; these read LFLL…CFLF, VFIF…YLLP, and REVF…IFTL.

This sequence to M.pneumoniae MPN_085 central region.

It localises to the cell membrane. This is an uncharacterized protein from Mycoplasma pneumoniae (strain ATCC 29342 / M129 / Subtype 1) (Mycoplasmoides pneumoniae).